The primary structure comprises 194 residues: Peptidyl-tRNA hydrolase (194 aa).

Tyrosine 17 provides a ligand contact to tRNA. Histidine 22 acts as the Proton acceptor in catalysis. TRNA is bound by residues phenylalanine 68, asparagine 70, and asparagine 116.

The protein belongs to the PTH family. In terms of assembly, monomer.

Its subcellular location is the cytoplasm. It carries out the reaction an N-acyl-L-alpha-aminoacyl-tRNA + H2O = an N-acyl-L-amino acid + a tRNA + H(+). Hydrolyzes ribosome-free peptidyl-tRNAs (with 1 or more amino acids incorporated), which drop off the ribosome during protein synthesis, or as a result of ribosome stalling. In terms of biological role, catalyzes the release of premature peptidyl moieties from peptidyl-tRNA molecules trapped in stalled 50S ribosomal subunits, and thus maintains levels of free tRNAs and 50S ribosomes. The sequence is that of Peptidyl-tRNA hydrolase from Actinobacillus pleuropneumoniae serotype 5b (strain L20).